The sequence spans 391 residues: DNA-directed RNA polymerase I subunit RPA43 (391 aa).

2 disordered regions span residues 1 to 27 and 220 to 391; these read MANW…SGGS and QKQV…KKSK. The span at 288–299 shows a compositional bias: basic residues; sequence GRHKEKKKKKKR. Residues 289 to 353 adopt a coiled-coil conformation; it reads RHKEKKKKKK…RDKQQDSAEI (65 aa). Residues 312 to 323 are compositionally biased toward polar residues; the sequence is MNNNSLQETALD. A compositionally biased stretch (basic residues) spans 336–345; the sequence is KEKKKKKKRD.

This sequence belongs to the eukaryotic RPA43 RNA polymerase subunit family. Component of the RNA polymerase I (Pol I) complex consisting of at least 13 subunits.

The protein localises to the nucleus. It is found in the nucleolus. DNA-dependent RNA polymerase catalyzes the transcription of DNA into RNA using the four ribonucleoside triphosphates as substrates. Component of RNA polymerase I which synthesizes ribosomal RNA precursors. May be involved in recruitment of Pol I to rDNA promoters. In Danio rerio (Zebrafish), this protein is DNA-directed RNA polymerase I subunit RPA43.